The primary structure comprises 201 residues: Transgelin (201 aa).

The residue at position 2 (Ala2) is an N-acetylalanine. Residues 24 to 137 form the Calponin-homology (CH) domain; it reads EELEERLVEW…RTVMALGSLA (114 aa). Residues 154 to 161 form a could be involved in actin-binding region; sequence KKAQEHKR. At Ser166 the chain carries Phosphoserine. Lys172 is subject to N6-acetyllysine. One copy of the Calponin-like repeat lies at 175–200; that stretch reads IGLQMGSNRGASQAGMTGYGRPRQII. Ser181 bears the Phosphoserine mark. Residue Arg183 is modified to Omega-N-methylarginine.

This sequence belongs to the calponin family. Smooth muscle and mesenchymal cells but not in skeletal muscle or lymphocytes.

It is found in the cytoplasm. Its function is as follows. Actin cross-linking/gelling protein. This chain is Transgelin (Tagln), found in Rattus norvegicus (Rat).